Reading from the N-terminus, the 364-residue chain is UDP-N-acetylglucosamine--N-acetylmuramyl-(pentapeptide) pyrophosphoryl-undecaprenol N-acetylglucosamine transferase (364 aa).

Residues threonine 10 to glycine 12, asparagine 124, arginine 166, serine 196, and glutamine 297 contribute to the UDP-N-acetyl-alpha-D-glucosamine site.

Belongs to the glycosyltransferase 28 family. MurG subfamily.

It is found in the cell membrane. It carries out the reaction di-trans,octa-cis-undecaprenyl diphospho-N-acetyl-alpha-D-muramoyl-L-alanyl-D-glutamyl-meso-2,6-diaminopimeloyl-D-alanyl-D-alanine + UDP-N-acetyl-alpha-D-glucosamine = di-trans,octa-cis-undecaprenyl diphospho-[N-acetyl-alpha-D-glucosaminyl-(1-&gt;4)]-N-acetyl-alpha-D-muramoyl-L-alanyl-D-glutamyl-meso-2,6-diaminopimeloyl-D-alanyl-D-alanine + UDP + H(+). It functions in the pathway cell wall biogenesis; peptidoglycan biosynthesis. Cell wall formation. Catalyzes the transfer of a GlcNAc subunit on undecaprenyl-pyrophosphoryl-MurNAc-pentapeptide (lipid intermediate I) to form undecaprenyl-pyrophosphoryl-MurNAc-(pentapeptide)GlcNAc (lipid intermediate II). This Caldanaerobacter subterraneus subsp. tengcongensis (strain DSM 15242 / JCM 11007 / NBRC 100824 / MB4) (Thermoanaerobacter tengcongensis) protein is UDP-N-acetylglucosamine--N-acetylmuramyl-(pentapeptide) pyrophosphoryl-undecaprenol N-acetylglucosamine transferase.